The sequence spans 133 residues: Small ribosomal subunit protein uS8c (133 aa).

The protein belongs to the universal ribosomal protein uS8 family. As to quaternary structure, part of the 30S ribosomal subunit.

It localises to the plastid. It is found in the chloroplast. Its function is as follows. One of the primary rRNA binding proteins, it binds directly to 16S rRNA central domain where it helps coordinate assembly of the platform of the 30S subunit. This Mesostigma viride (Green alga) protein is Small ribosomal subunit protein uS8c (rps8).